Here is a 66-residue protein sequence, read N- to C-terminus: Beta-mammal toxin Cv3 (66 aa).

An LCN-type CS-alpha/beta domain is found at 1–66; that stretch reads KEGYIVNYYD…VWPLPNKTCN (66 aa). 4 disulfide bridges follow: Cys-12–Cys-65, Cys-16–Cys-41, Cys-25–Cys-46, and Cys-29–Cys-48.

Expressed by the venom gland.

It is found in the secreted. Beta toxins bind voltage-independently at site-4 of sodium channels (Nav) and reduces peak current and shifts the voltage of activation toward more negative potentials thereby affecting sodium channel activation and promoting spontaneous and repetitive firing. This toxin is strongly toxic to mice. In Centruroides villegasi (Scorpion), this protein is Beta-mammal toxin Cv3.